The primary structure comprises 298 residues: Tyrosine recombinase XerC (298 aa).

Residues 1–84 (MNHIQEAFLN…TLRTFYEYWM (84 aa)) form the Core-binding (CB) domain. The Tyr recombinase domain maps to 105 to 286 (YLPQFFYEEE…SNQQLRKVYL (182 aa)). Residues Arg145, Lys169, His238, Arg241, and His264 contribute to the active site. The active-site O-(3'-phospho-DNA)-tyrosine intermediate is Tyr273.

The protein belongs to the 'phage' integrase family. XerC subfamily. In terms of assembly, forms a cyclic heterotetrameric complex composed of two molecules of XerC and two molecules of XerD.

The protein resides in the cytoplasm. In terms of biological role, site-specific tyrosine recombinase, which acts by catalyzing the cutting and rejoining of the recombining DNA molecules. The XerC-XerD complex is essential to convert dimers of the bacterial chromosome into monomers to permit their segregation at cell division. It also contributes to the segregational stability of plasmids. This chain is Tyrosine recombinase XerC, found in Staphylococcus aureus (strain Mu3 / ATCC 700698).